We begin with the raw amino-acid sequence, 126 residues long: Large ribosomal subunit protein bL17 (126 aa).

The protein belongs to the bacterial ribosomal protein bL17 family. As to quaternary structure, part of the 50S ribosomal subunit. Contacts protein L32.

The sequence is that of Large ribosomal subunit protein bL17 from Magnetococcus marinus (strain ATCC BAA-1437 / JCM 17883 / MC-1).